Here is a 353-residue protein sequence, read N- to C-terminus: Photosystem II protein D1 (353 aa).

Thr2 carries the post-translational modification N-acetylthreonine. Residue Thr2 is modified to Phosphothreonine. The next 3 membrane-spanning stretches (helical) occupy residues 29–46, 118–133, and 142–156; these read NIGW…TATS, HFLL…EWEL, and WIAV…AATA. His118 lines the chlorophyll a pocket. Position 126 (Tyr126) interacts with pheophytin a. Residues Asp170 and Glu189 each coordinate [CaMn4O5] cluster. A helical membrane pass occupies residues 197 to 218; the sequence is FHMLGVAGVFGGSLFSAMHGSL. His198 contacts chlorophyll a. A quinone-binding positions include His215 and 264-265; that span reads SF. His215 provides a ligand contact to Fe cation. Residue His272 participates in Fe cation binding. A helical transmembrane segment spans residues 274 to 288; sequence FLAAWPVVGIWFTAL. Residues His332, Glu333, Asp342, and Ala344 each contribute to the [CaMn4O5] cluster site. A propeptide spanning residues 345 to 353 is cleaved from the precursor; the sequence is AVEAPAVNG.

Belongs to the reaction center PufL/M/PsbA/D family. PSII is composed of 1 copy each of membrane proteins PsbA, PsbB, PsbC, PsbD, PsbE, PsbF, PsbH, PsbI, PsbJ, PsbK, PsbL, PsbM, PsbT, PsbX, PsbY, PsbZ, Psb30/Ycf12, at least 3 peripheral proteins of the oxygen-evolving complex and a large number of cofactors. It forms dimeric complexes. Requires The D1/D2 heterodimer binds P680, chlorophylls that are the primary electron donor of PSII, and subsequent electron acceptors. It shares a non-heme iron and each subunit binds pheophytin, quinone, additional chlorophylls, carotenoids and lipids. D1 provides most of the ligands for the Mn4-Ca-O5 cluster of the oxygen-evolving complex (OEC). There is also a Cl(-1) ion associated with D1 and D2, which is required for oxygen evolution. The PSII complex binds additional chlorophylls, carotenoids and specific lipids. as cofactor. Tyr-161 forms a radical intermediate that is referred to as redox-active TyrZ, YZ or Y-Z. Post-translationally, C-terminally processed by CTPA; processing is essential to allow assembly of the oxygen-evolving complex and thus photosynthetic growth.

Its subcellular location is the plastid. The protein localises to the chloroplast thylakoid membrane. The enzyme catalyses 2 a plastoquinone + 4 hnu + 2 H2O = 2 a plastoquinol + O2. Photosystem II (PSII) is a light-driven water:plastoquinone oxidoreductase that uses light energy to abstract electrons from H(2)O, generating O(2) and a proton gradient subsequently used for ATP formation. It consists of a core antenna complex that captures photons, and an electron transfer chain that converts photonic excitation into a charge separation. The D1/D2 (PsbA/PsbD) reaction center heterodimer binds P680, the primary electron donor of PSII as well as several subsequent electron acceptors. The sequence is that of Photosystem II protein D1 from Dumortiera hirsuta (Liverwort).